A 64-amino-acid chain; its full sequence is Large ribosomal subunit protein bL35c (64 aa).

It belongs to the bacterial ribosomal protein bL35 family.

It is found in the plastid. Its subcellular location is the chloroplast. The sequence is that of Large ribosomal subunit protein bL35c from Trieres chinensis (Marine centric diatom).